The following is a 371-amino-acid chain: Aspartate-semialdehyde dehydrogenase (371 aa).

NADP(+) is bound by residues 10-13 (RGMV), 37-38 (TS), and Gln-74. A phosphate-binding site is contributed by Arg-103. The active-site Acyl-thioester intermediate is Cys-136. Residue Gln-163 coordinates substrate. Ser-166 lines the NADP(+) pocket. Glu-243 contacts substrate. Residue Lys-246 participates in phosphate binding. Substrate is bound at residue Arg-270. Residue His-277 is the Proton acceptor of the active site. Residue Gln-353 coordinates NADP(+).

It belongs to the aspartate-semialdehyde dehydrogenase family. Homodimer.

It catalyses the reaction L-aspartate 4-semialdehyde + phosphate + NADP(+) = 4-phospho-L-aspartate + NADPH + H(+). It functions in the pathway amino-acid biosynthesis; L-lysine biosynthesis via DAP pathway; (S)-tetrahydrodipicolinate from L-aspartate: step 2/4. It participates in amino-acid biosynthesis; L-methionine biosynthesis via de novo pathway; L-homoserine from L-aspartate: step 2/3. Its pathway is amino-acid biosynthesis; L-threonine biosynthesis; L-threonine from L-aspartate: step 2/5. Catalyzes the NADPH-dependent formation of L-aspartate-semialdehyde (L-ASA) by the reductive dephosphorylation of L-aspartyl-4-phosphate. This Haemophilus influenzae (strain ATCC 51907 / DSM 11121 / KW20 / Rd) protein is Aspartate-semialdehyde dehydrogenase.